A 246-amino-acid chain; its full sequence is NAD-dependent protein deacetylase (246 aa).

The 246-residue stretch at 1-246 (MKMKEFLDLL…RRVMEEGGIS (246 aa)) folds into the Deacetylase sirtuin-type domain. NAD(+) contacts are provided by A22, T26, F33, R34, Q98, I100, D101, and H116. F33 is a binding site for nicotinamide. Nicotinamide is bound by residues I100 and D101. The active-site Proton acceptor is H116. Zn(2+) contacts are provided by C124, C127, C148, and C151. 7 residues coordinate NAD(+): S189, S190, N214, L215, G216, D231, and V232.

This sequence belongs to the sirtuin family. Class U subfamily. Zn(2+) serves as cofactor.

The protein resides in the cytoplasm. The catalysed reaction is N(6)-acetyl-L-lysyl-[protein] + NAD(+) + H2O = 2''-O-acetyl-ADP-D-ribose + nicotinamide + L-lysyl-[protein]. Non-competitively inhibited by nicotinamide in vitro and in vivo, but not by nicotinic acid. Nicotinamide inhibits the deacetylation activity by reacting with a reaction intermediate. Its function is as follows. NAD-dependent protein deacetylase which modulates the activities of several enzymes which are inactive in their acetylated form. Also has depropionylation activity in vitro. Also able to ADP-ribosylate peptide substrates with Arg or Lys in the +2 position. The role of this function in vivo is not clear. The polypeptide is NAD-dependent protein deacetylase (Thermotoga maritima (strain ATCC 43589 / DSM 3109 / JCM 10099 / NBRC 100826 / MSB8)).